Here is a 262-residue protein sequence, read N- to C-terminus: Acyl-[acyl-carrier-protein]--UDP-N-acetylglucosamine O-acyltransferase (262 aa).

Belongs to the transferase hexapeptide repeat family. LpxA subfamily. As to quaternary structure, homotrimer.

Its subcellular location is the cytoplasm. It carries out the reaction a (3R)-hydroxyacyl-[ACP] + UDP-N-acetyl-alpha-D-glucosamine = a UDP-3-O-[(3R)-3-hydroxyacyl]-N-acetyl-alpha-D-glucosamine + holo-[ACP]. The protein operates within glycolipid biosynthesis; lipid IV(A) biosynthesis; lipid IV(A) from (3R)-3-hydroxytetradecanoyl-[acyl-carrier-protein] and UDP-N-acetyl-alpha-D-glucosamine: step 1/6. In terms of biological role, involved in the biosynthesis of lipid A, a phosphorylated glycolipid that anchors the lipopolysaccharide to the outer membrane of the cell. In Vibrio campbellii (strain ATCC BAA-1116), this protein is Acyl-[acyl-carrier-protein]--UDP-N-acetylglucosamine O-acyltransferase.